Consider the following 411-residue polypeptide: MLTKDLSITFCGVKFPNPFCLSSSPVGNCYEMCAKAYDTGWGGVVFKTIGFFIANEVSPRFDHLVKEDTGFIGFKNMEQIAEHPLEENLAALRRLKEDYPDKVLIASIMGENEQQWEELARLVQEAGADMIECNFSCPQMTSHAMGSDVGQSPELVEKYCRAVKRGSTLPMLAKMTPNIGDMCEVALAAKRGGADGIAAINTVKSITNIDLNQKIGMPIVNGKSSISGYSGKAVKPIALRFIQQMRTHPELRDFPISGIGGIETWEDAAEFLLLGAATLQVTTGIMQYGYRIVEDMASGLSHYLADQGFDSLQEMVGLANNNIVPAEDLDRSYIVYPRINLDKCVGCGRCYISCYDGGHQAMEWSEKTRTPHCNTEKCVGCLLCGHVCPVGCIELGEVKFKKGEKEHPVTL.

Substrate-binding positions include N76 and 134-136 (NFS). C137 functions as the Nucleophile in the catalytic mechanism. 201 to 202 (NT) provides a ligand contact to substrate. 4Fe-4S ferredoxin-type domains are found at residues 335-367 (VYPR…WSEK) and 369-398 (RTPH…LGEV). 8 residues coordinate [4Fe-4S] cluster: C344, C347, C350, C354, C378, C381, C384, and C388.

This sequence belongs to the dihydropyrimidine dehydrogenase family. As to quaternary structure, heterotetramer of 2 PreA and 2 PreT subunits. Requires [4Fe-4S] cluster as cofactor.

It catalyses the reaction 5,6-dihydrouracil + NAD(+) = uracil + NADH + H(+). The catalysed reaction is 5,6-dihydrothymine + NAD(+) = thymine + NADH + H(+). Involved in pyrimidine base degradation. Catalyzes physiologically the reduction of uracil to 5,6-dihydrouracil (DHU) by using NADH as a specific cosubstrate. It also catalyzes the reverse reaction and the reduction of thymine to 5,6-dihydrothymine (DHT). In Escherichia coli O157:H7, this protein is NAD-dependent dihydropyrimidine dehydrogenase subunit PreA (preA).